Here is a 576-residue protein sequence, read N- to C-terminus: MLRNTPFGATPTYKLLLGFGLCSLGGAMLYAYFKTRNDEEEADSGGQRPASGIRGQTEEQKPQKEVCLKIVVDNEHVPLIMGRGGSNIKLIEEKTLAKIRLRDKDSGHKFCDISGVPDAVKAARALLIKEIERAPVVKVELQVPQRLASKINGRGGELLQEIRSSSLAKLNIDLNGRNGKAKITIIGNQKQVNIARKMLDDQIEEDEELVRSMEEVEQRREPRRSPTNSIASSMYSSQTSLSSHTQPRDKLMASKGEGKPMEVYVSAVASPTKFWVQLIGPQSKKLDSMVQEMTSYYSSAENRAKHVLTAPYVGQIVAAVFKFDEKWYRAEIVDIMPNQYNPKEQVIDLYFVDYGDSEYISPADICELRTDFLTLRFQAVECFLANVKSTIQTEPITWPKSSIAKFEELTEVAHWRKLIARVVTYKERPRATTAVSAAAKEGTPLPGVELFDPADNSELNIADLMITQGFALPLDDSYPVRSRSSTPSSNSDSTIEELCVSNPVTPLTPHSPMSMSIDVDSITQAENEHLAQQLQHLQHKLNGNDIKNINPAKLTATDLENGNNNNASTTNGASAH.

The interval 40–60 is disordered; sequence EEADSGGQRPASGIRGQTEEQ. KH domains are found at residues 65–127 and 136–199; these read EVCL…RALL and VVKV…RKML. The segment covering 209–224 has biased composition (basic and acidic residues); the sequence is LVRSMEEVEQRREPRR. Positions 209-253 are disordered; sequence LVRSMEEVEQRREPRRSPTNSIASSMYSSQTSLSSHTQPRDKLMA. The span at 232 to 243 shows a compositional bias: low complexity; sequence SSMYSSQTSLSS. The Tudor domain occupies 310–375; the sequence is APYVGQIVAA…CELRTDFLTL (66 aa). The interval 556–576 is disordered; it reads ATDLENGNNNNASTTNGASAH. Residues 561–576 are compositionally biased toward low complexity; it reads NGNNNNASTTNGASAH.

This sequence belongs to the Tdrkh family. Interacts (via C-terminus) with AGO3 (via the N-terminal region when symmetrically methylated on arginine residues); this interaction is RNA-independent and may be required for AGO3 localization to the nuage. Interacts (via Tudor domain) with piwi (via N-terminus). Interacts with tral and me31B. As to expression, ovaries (at protein level). Expressed in the ovary and testis.

The protein resides in the cytoplasm. The protein localises to the nucleus. It localises to the cytoplasmic ribonucleoprotein granule. Functionally, involved in the piwi-interacting RNA (piRNA) metabolic process, which mediates the repression of transposable elements during meiosis by forming complexes composed of piRNAs and Piwi proteins, and governs the methylation and subsequent repression of transposons which is essential for germline integrity. Likely to act by recruiting Piwi proteins such as AGO3 and piwi to the piRNA biogenesis machinery in the nuage. Required for the final steps of primary piRNA biogenesis by participating in the 3' end-trimming of piwi-bound intermediates into mature piRNAs. This Drosophila melanogaster (Fruit fly) protein is Tudor and KH domain-containing protein homolog.